Here is a 481-residue protein sequence, read N- to C-terminus: UDP-N-acetylmuramoyl-L-alanyl-D-glutamate--L-lysine ligase (481 aa).

S42 provides a ligand contact to UDP-N-acetyl-alpha-D-muramoyl-L-alanyl-D-glutamate. Residue 118–124 (GTKGKTT) participates in ATP binding. UDP-N-acetyl-alpha-D-muramoyl-L-alanyl-D-glutamate contacts are provided by residues Q158, 160–161 (TT), S187, and R195. K229 carries the post-translational modification N6-carboxylysine. Residues 404 to 407 (DDPN) carry the L-lysine recognition motif motif.

It belongs to the MurCDEF family. MurE subfamily. In terms of processing, carboxylation is probably crucial for Mg(2+) binding and, consequently, for the gamma-phosphate positioning of ATP.

It is found in the cytoplasm. The catalysed reaction is UDP-N-acetyl-alpha-D-muramoyl-L-alanyl-D-glutamate + L-lysine + ATP = UDP-N-acetyl-alpha-D-muramoyl-L-alanyl-gamma-D-glutamyl-L-lysine + ADP + phosphate + H(+). The protein operates within cell wall biogenesis; peptidoglycan biosynthesis. Its function is as follows. Catalyzes the addition of L-lysine to the nucleotide precursor UDP-N-acetylmuramoyl-L-alanyl-D-glutamate (UMAG) in the biosynthesis of bacterial cell-wall peptidoglycan. This is UDP-N-acetylmuramoyl-L-alanyl-D-glutamate--L-lysine ligase from Streptococcus pyogenes serotype M3 (strain SSI-1).